The following is a 682-amino-acid chain: 1,4-alpha-glucan-branching enzyme (682 aa).

Trp88 and Lys124 together coordinate (1,4-alpha-D-glucosyl)n. Asp342 acts as the Nucleophile in catalysis. Residue Glu397 is the Proton donor of the active site.

This sequence belongs to the glycosyl hydrolase 13 family. GlgB subfamily.

Its subcellular location is the cytoplasm. It catalyses the reaction Transfers a segment of a (1-&gt;4)-alpha-D-glucan chain to a primary hydroxy group in a similar glucan chain.. The protein operates within glycan biosynthesis; glycogen biosynthesis. Glycogen-branching enzyme participates in the glycogen biosynthetic process along with glycogenin and glycogen synthase. Generates alpha-1,6-glucosidic branches from alpha-1,4-linked glucose chains, to increase solubility of the glycogen polymer. This chain is 1,4-alpha-glucan-branching enzyme (GLC3), found in Cryptococcus neoformans var. neoformans serotype D (strain B-3501A) (Filobasidiella neoformans).